We begin with the raw amino-acid sequence, 220 residues long: dITP/XTP pyrophosphatase (220 aa).

Ser13–Lys18 lines the substrate pocket. Asp45 and Asp74 together coordinate Mg(2+). Asp74 serves as the catalytic Proton acceptor. Residues Ser75, Phe163 to Asp166, Lys186, and His199 to Arg200 contribute to the substrate site.

The protein belongs to the HAM1 NTPase family. As to quaternary structure, homodimer. The cofactor is Mg(2+).

It catalyses the reaction XTP + H2O = XMP + diphosphate + H(+). The catalysed reaction is dITP + H2O = dIMP + diphosphate + H(+). It carries out the reaction ITP + H2O = IMP + diphosphate + H(+). Functionally, pyrophosphatase that catalyzes the hydrolysis of nucleoside triphosphates to their monophosphate derivatives, with a high preference for the non-canonical purine nucleotides XTP (xanthosine triphosphate), dITP (deoxyinosine triphosphate) and ITP. Seems to function as a house-cleaning enzyme that removes non-canonical purine nucleotides from the nucleotide pool, thus preventing their incorporation into DNA/RNA and avoiding chromosomal lesions. In Brucella melitensis biotype 1 (strain ATCC 23456 / CCUG 17765 / NCTC 10094 / 16M), this protein is dITP/XTP pyrophosphatase.